The chain runs to 510 residues: NAD(P)H-quinone oxidoreductase subunit 2 A, chloroplastic (510 aa).

The next 13 helical transmembrane spans lie at 24–44 (LLLF…GLIL), 57–77 (IPWL…ALLF), 99–119 (IFQF…VEYI), 124–144 (MAIT…MFLC), 149–169 (LITI…LSGY), 183–203 (YLLM…WLYG), 227–247 (PGIS…LSPA), 295–315 (WHLL…LIAI), 323–343 (MLAY…IVGD), 354–374 (YMLF…LFGL), 395–415 (ALSL…AGFF), 418–438 (LYLF…IGLL), and 484–504 (MIVC…IIAI).

Belongs to the complex I subunit 2 family. As to quaternary structure, NDH is composed of at least 16 different subunits, 5 of which are encoded in the nucleus.

It is found in the plastid. Its subcellular location is the chloroplast thylakoid membrane. It catalyses the reaction a plastoquinone + NADH + (n+1) H(+)(in) = a plastoquinol + NAD(+) + n H(+)(out). The enzyme catalyses a plastoquinone + NADPH + (n+1) H(+)(in) = a plastoquinol + NADP(+) + n H(+)(out). In terms of biological role, NDH shuttles electrons from NAD(P)H:plastoquinone, via FMN and iron-sulfur (Fe-S) centers, to quinones in the photosynthetic chain and possibly in a chloroplast respiratory chain. The immediate electron acceptor for the enzyme in this species is believed to be plastoquinone. Couples the redox reaction to proton translocation, and thus conserves the redox energy in a proton gradient. The polypeptide is NAD(P)H-quinone oxidoreductase subunit 2 A, chloroplastic (Solanum tuberosum (Potato)).